Reading from the N-terminus, the 1423-residue chain is Histone-lysine N-methyltransferase ATXR7 (1423 aa).

Residues 263–312 (HACWFLVDGEGRNHGPHSILELFSWQQHGYVSDAALIRDGENKLRPITLA) enclose the GYF domain. Disordered stretches follow at residues 923–960 (CKDH…EGTK), 1057–1097 (CSIS…SSTD), and 1115–1158 (LPCH…GRPK). The segment covering 936–949 (QKVKKAHTSKLKRK) has biased composition (basic residues). The span at 950-959 (NLSDARDEGT) shows a compositional bias: basic and acidic residues. Positions 1057–1071 (CSISQKGRKSSQSSI) are enriched in polar residues. Composition is skewed to basic and acidic residues over residues 1115–1124 (LPCHTSDKLQ) and 1140–1157 (HTTE…DGRP). The region spanning 1266–1383 (KHLRFQQSKI…AGEEISYNYK (118 aa)) is the SET domain. An S-adenosyl-L-methionine-binding site is contributed by Tyr1382.

The protein belongs to the class V-like SAM-binding methyltransferase superfamily. Histone-lysine methyltransferase family. TRX/MLL subfamily. As to expression, expressed in the shoot and root apices, vascular tissues and mesophyll cells of rosette leaves.

It is found in the nucleus. It catalyses the reaction L-lysyl(4)-[histone H3] + 3 S-adenosyl-L-methionine = N(6),N(6),N(6)-trimethyl-L-lysyl(4)-[histone H3] + 3 S-adenosyl-L-homocysteine + 3 H(+). The catalysed reaction is L-lysyl(36)-[histone H3] + 2 S-adenosyl-L-methionine = N(6),N(6)-dimethyl-L-lysyl(36)-[histone H3] + 2 S-adenosyl-L-homocysteine + 2 H(+). Functionally, histone methyltransferase involved in regulation of flowering time. Required for the expression of the flowering repressors FLC and MADS-box genes of the MAF family. Required for histone H3 dimethylation on 'Lys-36' H3K36me2 at the FLC locus. Required for histone H3 trimethylation on 'Lys-4' (H3K4me3) at the FLC locus. Prevents trimethylation on 'Lys-27' (H3K27me3) at the same locus. Involved in the control of seed dormancy and germination. In Arabidopsis thaliana (Mouse-ear cress), this protein is Histone-lysine N-methyltransferase ATXR7.